The primary structure comprises 484 residues: tRNA sulfurtransferase (484 aa).

Residues 63–167 form the THUMP domain; that stretch reads QGIRERLSCM…DQRLFVVHDQ (105 aa). Residues 185–186, K267, G289, and Q298 each bind ATP; that span reads LM. C346 and C457 are disulfide-bonded. The region spanning 405-483 is the Rhodanese domain; that stretch reads ALAGQVILDI…GHANVRVYRP (79 aa). C457 serves as the catalytic Cysteine persulfide intermediate.

It belongs to the ThiI family.

The protein localises to the cytoplasm. It carries out the reaction [ThiI sulfur-carrier protein]-S-sulfanyl-L-cysteine + a uridine in tRNA + 2 reduced [2Fe-2S]-[ferredoxin] + ATP + H(+) = [ThiI sulfur-carrier protein]-L-cysteine + a 4-thiouridine in tRNA + 2 oxidized [2Fe-2S]-[ferredoxin] + AMP + diphosphate. It catalyses the reaction [ThiS sulfur-carrier protein]-C-terminal Gly-Gly-AMP + S-sulfanyl-L-cysteinyl-[cysteine desulfurase] + AH2 = [ThiS sulfur-carrier protein]-C-terminal-Gly-aminoethanethioate + L-cysteinyl-[cysteine desulfurase] + A + AMP + 2 H(+). It functions in the pathway cofactor biosynthesis; thiamine diphosphate biosynthesis. Functionally, catalyzes the ATP-dependent transfer of a sulfur to tRNA to produce 4-thiouridine in position 8 of tRNAs, which functions as a near-UV photosensor. Also catalyzes the transfer of sulfur to the sulfur carrier protein ThiS, forming ThiS-thiocarboxylate. This is a step in the synthesis of thiazole, in the thiamine biosynthesis pathway. The sulfur is donated as persulfide by IscS. The polypeptide is tRNA sulfurtransferase (Pseudomonas syringae pv. syringae (strain B728a)).